Here is a 404-residue protein sequence, read N- to C-terminus: MNPKGRTNLNRSIIGGHDHGSILQLLLFLLLLSSHGGFKFVAGQATHGGSDVSGDSSRFDPTMAILMIVLVSVFFFLGFFSVYIRRCLERVMGMDYGNPNDAGNWLATNRQQARGLDASIIETFPTFQYSTVKTLRIGKEALECSVCLNEFEDDETLRLIPKCCHVFHPGCIDAWLRSHTTCPLCRADLIPVPGESIVSIQIPGLVNDPPGSDPNGDRIRSLGSPDARLIESVALTCNQSMPRRSMSTGWNLAGMFTNSDRTGQHSENLDRFTLRLPQDIHNKLVNPNLSKVHVALPQVMSSTRGYRTGSLGSERNYFYYERFDQDGRLDRRPFSITPPYRTSSINHMSPGGSGGDKVRASSPKSLLLAMRSPFDRLFLGKNNNVGENSSDHLRSCDATPSNTV.

The first 36 residues, 1 to 36 (MNPKGRTNLNRSIIGGHDHGSILQLLLFLLLLSSHG), serve as a signal peptide directing secretion. Residues 64–84 (AILMIVLVSVFFFLGFFSVYI) form a helical membrane-spanning segment. Residues 144–186 (CSVCLNEFEDDETLRLIPKCCHVFHPGCIDAWLRSHTTCPLCR) form an RING-type; atypical zinc finger. Disordered regions lie at residues 339 to 361 (PYRT…VRAS) and 385 to 404 (VGEN…SNTV).

It belongs to the RING-type zinc finger family. ATL subfamily.

The protein resides in the membrane. It carries out the reaction S-ubiquitinyl-[E2 ubiquitin-conjugating enzyme]-L-cysteine + [acceptor protein]-L-lysine = [E2 ubiquitin-conjugating enzyme]-L-cysteine + N(6)-ubiquitinyl-[acceptor protein]-L-lysine.. Its pathway is protein modification; protein ubiquitination. The sequence is that of RING-H2 finger protein ATL11 (ATL11) from Arabidopsis thaliana (Mouse-ear cress).